Consider the following 704-residue polypeptide: Ribosomal RNA large subunit methyltransferase K/L (704 aa).

The 112-residue stretch at 43-154 (TMYQSLLWSR…KEKASLSLDL (112 aa)) folds into the THUMP domain.

This sequence belongs to the methyltransferase superfamily. RlmKL family.

The protein localises to the cytoplasm. The enzyme catalyses guanosine(2445) in 23S rRNA + S-adenosyl-L-methionine = N(2)-methylguanosine(2445) in 23S rRNA + S-adenosyl-L-homocysteine + H(+). It carries out the reaction guanosine(2069) in 23S rRNA + S-adenosyl-L-methionine = N(2)-methylguanosine(2069) in 23S rRNA + S-adenosyl-L-homocysteine + H(+). Specifically methylates the guanine in position 2445 (m2G2445) and the guanine in position 2069 (m7G2069) of 23S rRNA. The protein is Ribosomal RNA large subunit methyltransferase K/L of Proteus mirabilis (strain HI4320).